Here is a 474-residue protein sequence, read N- to C-terminus: Calcitonin receptor (474 aa).

The signal sequence occupies residues 1-24 (MRFTFTSRCLALFLLLNHPTPILP). Residues 25–146 (AFSNQTYPTI…FTPEKLKNAY (122 aa)) lie on the Extracellular side of the membrane. Asparagine 28, asparagine 73, asparagine 125, and asparagine 130 each carry an N-linked (GlcNAc...) asparagine glycan. Cystine bridges form between cysteine 55–cysteine 81, cysteine 72–cysteine 112, and cysteine 95–cysteine 134. The helical transmembrane segment at 147-169 (VLYYLAIVGHSLSIFTLVISLGI) threads the bilayer. Residues 170–181 (FVFFRSLGCQRV) are Cytoplasmic-facing. A helical transmembrane segment spans residues 182–202 (TLHKNMFLTYILNSMIIIIHL). Residues 203–219 (VEVVPNGELVRRDPVSC) lie on the Extracellular side of the membrane. Cysteine 219 and cysteine 289 form a disulfide bridge. The chain crosses the membrane as a helical span at residues 220–242 (KILHFFHQYMMACNYFWMLCEGI). The Cytoplasmic segment spans residues 243 to 259 (YLHTLIVVAVFTEKQRL). The helical transmembrane segment at 260–280 (RWYYLLGWGFPLVPTTIHAIT) threads the bilayer. Residues 281–296 (RAVYFNDNCWLSVETH) are Extracellular-facing. Residues 297–320 (LLYIIHGPVMAALVVNFFFLLNIV) traverse the membrane as a helical segment. Residues 321–340 (RVLVTKMRETHEAESHMYLK) are Cytoplasmic-facing. Residues 341–359 (AVKATMILVPLLGIQFVVF) traverse the membrane as a helical segment. The Extracellular portion of the chain corresponds to 360 to 367 (PWRPSNKM). Residues 368–394 (LGKIYDYVMHSLIHFQGFFVATIYCFC) traverse the membrane as a helical segment. The Cytoplasmic portion of the chain corresponds to 395–474 (NNEVQTTVKR…LNIIEQESSA (80 aa)).

It belongs to the G-protein coupled receptor 2 family. Heterodimer of CALCR and RAMP1, RAMP2 or RAMP3; the receptor complexes function as AMYR1, AMYR2 and AMYR3 receptors, respectively, and respond to amylin/IAPP, calcitonin/CT and CGRP1 ligands. Interacts with GPRASP2.

Its subcellular location is the cell membrane. Its activity is regulated as follows. Sensitive to cholera toxin. Its function is as follows. G protein-coupled receptor activated by ligand peptides amylin (IAPP), calcitonin (CT/CALCA) and calcitonin gene-related peptide type 1 (CGRP1/CALCA). CALCR interacts with receptor-activity-modifying proteins RAMP1, 2 and 3 to form receptor complexes AMYR1, 2 and 3, respectively. IAPP, CT and CGRP1 activate CALCR and AMYRs with distinct modes of receptor activation resulting in specific phenotypes. Ligand binding causes a conformation change that triggers signaling via guanine nucleotide-binding proteins (G proteins) and modulates the activity of downstream effectors. Activates cAMP-dependent pathway. Functionally, non-functional protein. Unable to couple to G proteins and activate adenylyl cyclase. Does not undergo receptor internalization following ligand binding. In Homo sapiens (Human), this protein is Calcitonin receptor.